A 526-amino-acid chain; its full sequence is Acetyl-CoA hydrolase (526 aa).

Position 277–281 (277–281) interacts with CoA; sequence GIGNI. E302 acts as the 5-glutamyl coenzyme A thioester intermediate in catalysis. Positions 392 and 396 each coordinate CoA.

The protein belongs to the acetyl-CoA hydrolase/transferase family.

Its subcellular location is the cytoplasm. The enzyme catalyses acetyl-CoA + H2O = acetate + CoA + H(+). Its function is as follows. Presumably involved in regulating the intracellular acetyl-CoA pool for fatty acid and cholesterol synthesis and fatty acid oxidation. The sequence is that of Acetyl-CoA hydrolase (ACH1) from Candida glabrata (strain ATCC 2001 / BCRC 20586 / JCM 3761 / NBRC 0622 / NRRL Y-65 / CBS 138) (Yeast).